The following is a 354-amino-acid chain: tRNA N6-adenosine threonylcarbamoyltransferase (354 aa).

2 residues coordinate Fe cation: His111 and His115. Residues 134-138 (LVSGG), Asp167, Gly180, and Asn279 each bind substrate. Fe cation is bound at residue Asp319.

It belongs to the KAE1 / TsaD family. The cofactor is Fe(2+).

The protein localises to the cytoplasm. It carries out the reaction L-threonylcarbamoyladenylate + adenosine(37) in tRNA = N(6)-L-threonylcarbamoyladenosine(37) in tRNA + AMP + H(+). In terms of biological role, required for the formation of a threonylcarbamoyl group on adenosine at position 37 (t(6)A37) in tRNAs that read codons beginning with adenine. Is involved in the transfer of the threonylcarbamoyl moiety of threonylcarbamoyl-AMP (TC-AMP) to the N6 group of A37, together with TsaE and TsaB. TsaD likely plays a direct catalytic role in this reaction. In Neisseria meningitidis, this protein is tRNA N6-adenosine threonylcarbamoyltransferase.